The sequence spans 548 residues: Probable malate:quinone oxidoreductase (548 aa).

A disordered region spans residues 521-548 (DKPQAADSTPKPQLKPQPVQKEVADIAL). Residues 530-541 (PKPQLKPQPVQK) show a composition bias toward low complexity.

It belongs to the MQO family. FAD serves as cofactor.

The enzyme catalyses (S)-malate + a quinone = a quinol + oxaloacetate. It functions in the pathway carbohydrate metabolism; tricarboxylic acid cycle; oxaloacetate from (S)-malate (quinone route): step 1/1. This is Probable malate:quinone oxidoreductase from Escherichia coli (strain UTI89 / UPEC).